The following is a 654-amino-acid chain: Fructose-1,6-bisphosphatase class 3 (654 aa).

The interval 288-307 (NPAFKPKKRPDKHERLTQRE) is disordered. A compositionally biased stretch (basic and acidic residues) spans 298 to 307 (DKHERLTQRE).

It belongs to the FBPase class 3 family. Requires Mn(2+) as cofactor.

It catalyses the reaction beta-D-fructose 1,6-bisphosphate + H2O = beta-D-fructose 6-phosphate + phosphate. It participates in carbohydrate biosynthesis; gluconeogenesis. This is Fructose-1,6-bisphosphatase class 3 from Staphylococcus aureus (strain MRSA252).